We begin with the raw amino-acid sequence, 459 residues long: uncharacterized protein (459 aa).

A TRAM domain is found at 6–64; it reads KNKQEKNIIITIKRLGINGEGIGYYKKKIIFIPGALPNEVVVAKIVDRHPHYLEGELVR. S-adenosyl-L-methionine-binding residues include Gln-289, Tyr-318, Glu-339, and Asp-387. Residue Cys-414 is the Nucleophile of the active site.

It belongs to the class I-like SAM-binding methyltransferase superfamily. RNA M5U methyltransferase family.

This is an uncharacterized protein from Lactobacillus johnsonii (strain CNCM I-12250 / La1 / NCC 533).